A 118-amino-acid polypeptide reads, in one-letter code: UPF0251 protein Teth39_0655 (118 aa).

The protein belongs to the UPF0251 family.

The polypeptide is UPF0251 protein Teth39_0655 (Thermoanaerobacter pseudethanolicus (strain ATCC 33223 / 39E) (Clostridium thermohydrosulfuricum)).